A 461-amino-acid polypeptide reads, in one-letter code: Coronin-1A (461 aa).

S2 carries the N-acetylserine modification. At S2 the chain carries Phosphoserine; by PKC. WD repeat units lie at residues H13–P63, N73–E110, P123–D160, G164–E204, K207–D251, P258–E296, and P302–A349. Basic and acidic residues predominate over residues N407–T418. The segment at N407–S431 is disordered. The residue at position 412 (S412) is a Phosphoserine; by PKC. T418 is subject to Phosphothreonine. Residues E420–V430 show a composition bias toward polar residues. At S422 the chain carries Phosphoserine. The stretch at L425–K461 forms a coiled coil.

Belongs to the WD repeat coronin family. Binds actin. In terms of processing, phosphorylation at Ser-412 by PKC strongly down-regulates the association with actin. Post-translationally, polyubiquitinated by RNF128 with 'Lys-48'-linked chains, leading to proteasomal degradation.

The protein resides in the cytoplasm. It localises to the cytoskeleton. Its subcellular location is the cell cortex. It is found in the cytoplasmic vesicle. The protein localises to the phagosome membrane. Functionally, may be a crucial component of the cytoskeleton of highly motile cells, functioning both in the invagination of large pieces of plasma membrane, as well as in forming protrusions of the plasma membrane involved in cell locomotion. In Rattus norvegicus (Rat), this protein is Coronin-1A (Coro1a).